An 87-amino-acid polypeptide reads, in one-letter code: Phosphoribosyl-ATP pyrophosphatase (87 aa).

Belongs to the PRA-PH family.

The protein localises to the cytoplasm. It carries out the reaction 1-(5-phospho-beta-D-ribosyl)-ATP + H2O = 1-(5-phospho-beta-D-ribosyl)-5'-AMP + diphosphate + H(+). The protein operates within amino-acid biosynthesis; L-histidine biosynthesis; L-histidine from 5-phospho-alpha-D-ribose 1-diphosphate: step 2/9. In Beutenbergia cavernae (strain ATCC BAA-8 / DSM 12333 / CCUG 43141 / JCM 11478 / NBRC 16432 / NCIMB 13614 / HKI 0122), this protein is Phosphoribosyl-ATP pyrophosphatase.